Reading from the N-terminus, the 138-residue chain is Small ribosomal subunit protein uS11c (138 aa).

Residues 1 to 23 (MAKPILRIGSRKNTRSGSRKNVR) form a disordered region. Over residues 9 to 23 (GSRKNTRSGSRKNVR) the composition is skewed to basic residues.

Belongs to the universal ribosomal protein uS11 family. As to quaternary structure, part of the 30S ribosomal subunit.

Its subcellular location is the plastid. It is found in the chloroplast. This is Small ribosomal subunit protein uS11c from Aethionema grandiflorum (Persian stone-cress).